A 279-amino-acid chain; its full sequence is Zinc-finger homeodomain protein 1 (279 aa).

The span at methionine 1–methionine 13 shows a compositional bias: acidic residues. A disordered region spans residues methionine 1–valine 47. The ZF-HD dimerization-type; degenerate zinc-finger motif lies at tyrosine 57–glutamate 106. Residues alanine 157 to glycine 191 are disordered. A DNA-binding region (homeobox) is located at residues lysine 215–leucine 278.

As to quaternary structure, homo- and heterodimer with other ZFHD proteins.

The protein localises to the nucleus. Putative transcription factor. This chain is Zinc-finger homeodomain protein 1 (ZHD1), found in Oryza sativa subsp. indica (Rice).